The sequence spans 600 residues: Proline--tRNA ligase (600 aa).

The protein belongs to the class-II aminoacyl-tRNA synthetase family. ProS type 1 subfamily. In terms of assembly, homodimer.

Its subcellular location is the cytoplasm. It catalyses the reaction tRNA(Pro) + L-proline + ATP = L-prolyl-tRNA(Pro) + AMP + diphosphate. Catalyzes the attachment of proline to tRNA(Pro) in a two-step reaction: proline is first activated by ATP to form Pro-AMP and then transferred to the acceptor end of tRNA(Pro). As ProRS can inadvertently accommodate and process non-cognate amino acids such as alanine and cysteine, to avoid such errors it has two additional distinct editing activities against alanine. One activity is designated as 'pretransfer' editing and involves the tRNA(Pro)-independent hydrolysis of activated Ala-AMP. The other activity is designated 'posttransfer' editing and involves deacylation of mischarged Ala-tRNA(Pro). The misacylated Cys-tRNA(Pro) is not edited by ProRS. The protein is Proline--tRNA ligase of Prochlorococcus marinus subsp. pastoris (strain CCMP1986 / NIES-2087 / MED4).